A 239-amino-acid polypeptide reads, in one-letter code: Pyridoxine 5'-phosphate synthase (239 aa).

Residue Asn7 participates in 3-amino-2-oxopropyl phosphate binding. 9 to 10 is a binding site for 1-deoxy-D-xylulose 5-phosphate; it reads DH. A 3-amino-2-oxopropyl phosphate-binding site is contributed by Arg18. Residue His43 is the Proton acceptor of the active site. Residues Arg45 and His50 each coordinate 1-deoxy-D-xylulose 5-phosphate. Catalysis depends on Glu70, which acts as the Proton acceptor. Thr100 contributes to the 1-deoxy-D-xylulose 5-phosphate binding site. His191 serves as the catalytic Proton donor. 3-amino-2-oxopropyl phosphate contacts are provided by residues Gly192 and 213-214; that span reads GH.

Belongs to the PNP synthase family. As to quaternary structure, homooctamer; tetramer of dimers.

It is found in the cytoplasm. It catalyses the reaction 3-amino-2-oxopropyl phosphate + 1-deoxy-D-xylulose 5-phosphate = pyridoxine 5'-phosphate + phosphate + 2 H2O + H(+). Its pathway is cofactor biosynthesis; pyridoxine 5'-phosphate biosynthesis; pyridoxine 5'-phosphate from D-erythrose 4-phosphate: step 5/5. In terms of biological role, catalyzes the complicated ring closure reaction between the two acyclic compounds 1-deoxy-D-xylulose-5-phosphate (DXP) and 3-amino-2-oxopropyl phosphate (1-amino-acetone-3-phosphate or AAP) to form pyridoxine 5'-phosphate (PNP) and inorganic phosphate. In Pelobacter propionicus (strain DSM 2379 / NBRC 103807 / OttBd1), this protein is Pyridoxine 5'-phosphate synthase.